The chain runs to 320 residues: ATP-dependent 6-phosphofructokinase (320 aa).

G12 contributes to the ATP binding site. R22–R26 lines the ADP pocket. ATP is bound by residues R73–F74 and G103–S106. Residue D104 participates in Mg(2+) binding. Substrate is bound at residue T126–D128. The active-site Proton acceptor is the D128. An ADP-binding site is contributed by R155. Substrate contacts are provided by residues R163 and M170–R172. ADP-binding positions include G186–E188, K212, and K214–H216. Substrate-binding positions include E223, R244, and H250–R253.

It belongs to the phosphofructokinase type A (PFKA) family. ATP-dependent PFK group I subfamily. Prokaryotic clade 'B1' sub-subfamily. In terms of assembly, homotetramer. Mg(2+) is required as a cofactor.

It localises to the cytoplasm. It carries out the reaction beta-D-fructose 6-phosphate + ATP = beta-D-fructose 1,6-bisphosphate + ADP + H(+). It functions in the pathway carbohydrate degradation; glycolysis; D-glyceraldehyde 3-phosphate and glycerone phosphate from D-glucose: step 3/4. Its activity is regulated as follows. Allosterically activated by ADP and other diphosphonucleosides, and allosterically inhibited by phosphoenolpyruvate. Its function is as follows. Catalyzes the phosphorylation of D-fructose 6-phosphate to fructose 1,6-bisphosphate by ATP, the first committing step of glycolysis. This chain is ATP-dependent 6-phosphofructokinase, found in Vibrio campbellii (strain ATCC BAA-1116).